Consider the following 208-residue polypeptide: Uracil phosphoribosyltransferase (208 aa).

5-phospho-alpha-D-ribose 1-diphosphate contacts are provided by residues Arg78, Arg103, and 130–138 (DPMLATGGS). Uracil is bound by residues Ile193 and 198-200 (GDA). Position 199 (Asp199) interacts with 5-phospho-alpha-D-ribose 1-diphosphate.

It belongs to the UPRTase family. Requires Mg(2+) as cofactor.

The enzyme catalyses UMP + diphosphate = 5-phospho-alpha-D-ribose 1-diphosphate + uracil. Its pathway is pyrimidine metabolism; UMP biosynthesis via salvage pathway; UMP from uracil: step 1/1. Its activity is regulated as follows. Allosterically activated by GTP. In terms of biological role, catalyzes the conversion of uracil and 5-phospho-alpha-D-ribose 1-diphosphate (PRPP) to UMP and diphosphate. The sequence is that of Uracil phosphoribosyltransferase from Histophilus somni (strain 129Pt) (Haemophilus somnus).